The sequence spans 258 residues: Regulatory protein RecX (258 aa).

This sequence belongs to the RecX family.

Its subcellular location is the cytoplasm. Its function is as follows. Modulates RecA activity. The sequence is that of Regulatory protein RecX from Streptococcus thermophilus (strain CNRZ 1066).